The chain runs to 479 residues: Adenosylhomocysteinase (479 aa).

Residues Thr-65, Asp-144, and Glu-204 each coordinate substrate. Residue 205–207 (TTT) participates in NAD(+) binding. The substrate site is built by Lys-234 and Asp-238. NAD(+) contacts are provided by residues Asn-239, 268–273 (GYGDVG), Glu-291, Asn-326, 347–349 (IGH), and Asn-392.

The protein belongs to the adenosylhomocysteinase family. The cofactor is NAD(+).

It localises to the cytoplasm. It catalyses the reaction S-adenosyl-L-homocysteine + H2O = L-homocysteine + adenosine. It functions in the pathway amino-acid biosynthesis; L-homocysteine biosynthesis; L-homocysteine from S-adenosyl-L-homocysteine: step 1/1. Its function is as follows. May play a key role in the regulation of the intracellular concentration of adenosylhomocysteine. This chain is Adenosylhomocysteinase, found in Variovorax paradoxus (strain S110).